The following is a 419-amino-acid chain: Dimethylamine methyltransferase MtbB2 (419 aa).

Position 308 (O308) is a non-standard amino acid, pyrrolysine.

It belongs to the dimethylamine methyltransferase family.

It catalyses the reaction Co(I)-[dimethylamine-specific corrinoid protein] + dimethylamine + H(+) = methyl-Co(III)-[dimethylamine-specific corrinoid protein] + methylamine. It functions in the pathway one-carbon metabolism; methanogenesis from dimethylamine. Functionally, catalyzes the transfer of a methyl group from dimethylamine to the corrinoid cofactor of MtbC. No evidence for expression of this protein has been found after growth under presumably inducing conditions. The protein is Dimethylamine methyltransferase MtbB2 of Methanosarcina barkeri.